The sequence spans 473 residues: Photosystem II CP43 reaction center protein (473 aa).

Residues 1-14 (MKILYSLRRFYHVE) constitute a propeptide that is removed on maturation. The residue at position 15 (threonine 15) is an N-acetylthreonine. At threonine 15 the chain carries Phosphothreonine. 5 helical membrane-spanning segments follow: residues 69–93 (LFEV…PHLA), 134–155 (LLGP…KDRN), 178–200 (KALY…RKIT), 255–275 (KPFA…LSYS), and 291–312 (WFNN…ASQA). Glutamate 367 contributes to the [CaMn4O5] cluster binding site. The helical transmembrane segment at 447 to 471 (RARAAAAGFEKGIDRDLEPVLYMTP) threads the bilayer.

The protein belongs to the PsbB/PsbC family. PsbC subfamily. As to quaternary structure, PSII is composed of 1 copy each of membrane proteins PsbA, PsbB, PsbC, PsbD, PsbE, PsbF, PsbH, PsbI, PsbJ, PsbK, PsbL, PsbM, PsbT, PsbX, PsbY, PsbZ, Psb30/Ycf12, at least 3 peripheral proteins of the oxygen-evolving complex and a large number of cofactors. It forms dimeric complexes. It depends on Binds multiple chlorophylls and provides some of the ligands for the Ca-4Mn-5O cluster of the oxygen-evolving complex. It may also provide a ligand for a Cl- that is required for oxygen evolution. PSII binds additional chlorophylls, carotenoids and specific lipids. as a cofactor.

Its subcellular location is the plastid. It localises to the chloroplast thylakoid membrane. One of the components of the core complex of photosystem II (PSII). It binds chlorophyll and helps catalyze the primary light-induced photochemical processes of PSII. PSII is a light-driven water:plastoquinone oxidoreductase, using light energy to abstract electrons from H(2)O, generating O(2) and a proton gradient subsequently used for ATP formation. This Saccharum hybrid (Sugarcane) protein is Photosystem II CP43 reaction center protein.